We begin with the raw amino-acid sequence, 197 residues long: Transcription factor FapR (197 aa).

It belongs to the FapR family.

In terms of biological role, transcriptional factor involved in regulation of membrane lipid biosynthesis by repressing genes involved in fatty acid and phospholipid metabolism. In Bacillus anthracis (strain A0248), this protein is Transcription factor FapR.